We begin with the raw amino-acid sequence, 270 residues long: Formamidopyrimidine-DNA glycosylase (270 aa).

P2 (schiff-base intermediate with DNA) is an active-site residue. E3 functions as the Proton donor in the catalytic mechanism. The Proton donor; for beta-elimination activity role is filled by K58. Residues H91, R109, and R151 each contribute to the DNA site. The FPG-type zinc-finger motif lies at 236–270; it reads QVYGKTGQQCPSCETPLKAVKLAARASVYCPECQS. R260 acts as the Proton donor; for delta-elimination activity in catalysis.

The protein belongs to the FPG family. In terms of assembly, monomer. Zn(2+) serves as cofactor.

The enzyme catalyses Hydrolysis of DNA containing ring-opened 7-methylguanine residues, releasing 2,6-diamino-4-hydroxy-5-(N-methyl)formamidopyrimidine.. It catalyses the reaction 2'-deoxyribonucleotide-(2'-deoxyribose 5'-phosphate)-2'-deoxyribonucleotide-DNA = a 3'-end 2'-deoxyribonucleotide-(2,3-dehydro-2,3-deoxyribose 5'-phosphate)-DNA + a 5'-end 5'-phospho-2'-deoxyribonucleoside-DNA + H(+). Functionally, involved in base excision repair of DNA damaged by oxidation or by mutagenic agents. Acts as a DNA glycosylase that recognizes and removes damaged bases. Has a preference for oxidized purines, such as 7,8-dihydro-8-oxoguanine (8-oxoG). Has AP (apurinic/apyrimidinic) lyase activity and introduces nicks in the DNA strand. Cleaves the DNA backbone by beta-delta elimination to generate a single-strand break at the site of the removed base with both 3'- and 5'-phosphates. This Psychromonas ingrahamii (strain DSM 17664 / CCUG 51855 / 37) protein is Formamidopyrimidine-DNA glycosylase.